Here is a 462-residue protein sequence, read N- to C-terminus: Argininosuccinate lyase (462 aa).

This sequence belongs to the lyase 1 family. Argininosuccinate lyase subfamily.

It is found in the cytoplasm. The catalysed reaction is 2-(N(omega)-L-arginino)succinate = fumarate + L-arginine. The protein operates within amino-acid biosynthesis; L-arginine biosynthesis; L-arginine from L-ornithine and carbamoyl phosphate: step 3/3. The polypeptide is Argininosuccinate lyase (Prochlorococcus marinus (strain SARG / CCMP1375 / SS120)).